Reading from the N-terminus, the 219-residue chain is Proteasome subunit beta type-9 (219 aa).

Positions 1 to 20 (MLRTGAPNGDLPRAGEVHTG) are cleaved as a propeptide — removed in mature form. T21 (nucleophile) is an active-site residue. 2 positions are modified to N6-acetyllysine: K53 and K109.

Belongs to the peptidase T1B family. The 26S proteasome consists of a 20S proteasome core and two 19S regulatory subunits. The 20S proteasome core is composed of 28 subunits that are arranged in four stacked rings, resulting in a barrel-shaped structure. The two end rings are each formed by seven alpha subunits, and the two central rings are each formed by seven beta subunits. The catalytic chamber with the active sites is on the inside of the barrel. Component of the immunoproteasome, where it displaces the equivalent housekeeping subunit PSMB6. Component of the spermatoproteasome, a form of the proteasome specifically found in testis. Post-translationally, autocleaved. The resulting N-terminal Thr residue of the mature subunit is responsible for the nucleophile proteolytic activity.

The protein localises to the cytoplasm. Its subcellular location is the nucleus. It catalyses the reaction Cleavage of peptide bonds with very broad specificity.. In terms of biological role, the proteasome is a multicatalytic proteinase complex which is characterized by its ability to cleave peptides with Arg, Phe, Tyr, Leu, and Glu adjacent to the leaving group at neutral or slightly basic pH. The proteasome has an ATP-dependent proteolytic activity. This subunit is involved in antigen processing to generate class I binding peptides. This Bos taurus (Bovine) protein is Proteasome subunit beta type-9 (PSMB9).